A 147-amino-acid polypeptide reads, in one-letter code: Deoxyuridine 5'-triphosphate nucleotidohydrolase (147 aa).

Substrate contacts are provided by residues 68–70, asparagine 81, and 85–87; these read RSG and TID.

This sequence belongs to the dUTPase family. Mg(2+) is required as a cofactor.

It catalyses the reaction dUTP + H2O = dUMP + diphosphate + H(+). The protein operates within pyrimidine metabolism; dUMP biosynthesis; dUMP from dCTP (dUTP route): step 2/2. Its function is as follows. This enzyme is involved in nucleotide metabolism: it produces dUMP, the immediate precursor of thymidine nucleotides and it decreases the intracellular concentration of dUTP so that uracil cannot be incorporated into DNA. In Solibacter usitatus (strain Ellin6076), this protein is Deoxyuridine 5'-triphosphate nucleotidohydrolase.